The following is a 518-amino-acid chain: 12S seed storage globulin 1 (518 aa).

The signal sequence occupies residues methionine 1–alanine 24. Cystine bridges form between cysteine 45–cysteine 78 and cysteine 121–cysteine 324. Residues leucine 50–glutamine 240 enclose the Cupin type-1 1 domain. The span at glutamine 281–serine 295 shows a compositional bias: low complexity. The disordered stretch occupies residues glutamine 281–serine 311. The segment covering proline 296–serine 311 has biased composition (polar residues). In terms of domain architecture, Cupin type-1 2 spans glutamine 330–glutamine 479. The interval phenylalanine 496–glutamate 518 is disordered.

Belongs to the 11S seed storage protein (globulins) family. In terms of assembly, hexamer; each subunit is composed of an acidic and a basic chain derived from a single precursor and linked by a disulfide bond.

Its function is as follows. This is a seed storage protein. The protein is 12S seed storage globulin 1 of Avena sativa (Oat).